Reading from the N-terminus, the 178-residue chain is Glucagon-1 (178 aa).

The first 21 residues, 1–21 (MFGIHSLAGVLLLVIVQRQLA), serve as a signal peptide directing secretion. Propeptides lie at residues 83–87 (SGAPS), 123–134 (ESAEESRNGPMS), and 171–178 (SNKRQEDH).

Belongs to the glucagon family.

The protein localises to the secreted. Promotes hydrolysis of glycogen and lipids, and raises the blood sugar level. In Oncorhynchus mykiss (Rainbow trout), this protein is Glucagon-1 (gcg1).